Here is a 186-residue protein sequence, read N- to C-terminus: Adenylate kinase (186 aa).

14–19 (GAGKGT) contacts ATP. Residues 34 to 63 (STGDILRDHVARGTPLGERVRPIMERGDLV) are NMP. AMP is bound by residues Thr-35, Arg-40, 61–63 (DLV), 84–87 (GFPR), and Gln-91. The segment at 125-135 (RRAELEGRSDD) is LID. Arg-126 is a binding site for ATP. Residues Arg-132 and Arg-143 each contribute to the AMP site. Gly-171 provides a ligand contact to ATP.

This sequence belongs to the adenylate kinase family. In terms of assembly, monomer.

It is found in the cytoplasm. The catalysed reaction is AMP + ATP = 2 ADP. The protein operates within purine metabolism; AMP biosynthesis via salvage pathway; AMP from ADP: step 1/1. Catalyzes the reversible transfer of the terminal phosphate group between ATP and AMP. Plays an important role in cellular energy homeostasis and in adenine nucleotide metabolism. The protein is Adenylate kinase of Thermus thermophilus (strain ATCC BAA-163 / DSM 7039 / HB27).